The chain runs to 469 residues: Putative pyridoxal-dependent decarboxylase domain-containing protein 2 (469 aa).

Residues 12-40 (TLAEMGKNLKEAVKMLEDSQRRTEEENGK) are a coiled coil. Over residues 28-44 (EDSQRRTEEENGKKLIS) the composition is skewed to basic and acidic residues. The disordered stretch occupies residues 28–47 (EDSQRRTEEENGKKLISRDI).

It belongs to the group II decarboxylase family. Pyridoxal 5'-phosphate is required as a cofactor.

This chain is Putative pyridoxal-dependent decarboxylase domain-containing protein 2 (PDXDC2P), found in Homo sapiens (Human).